A 266-amino-acid chain; its full sequence is Large ribosomal subunit protein uL4 (266 aa).

Belongs to the universal ribosomal protein uL4 family. As to quaternary structure, part of the 50S ribosomal subunit.

Functionally, one of the primary rRNA binding proteins, this protein initially binds near the 5'-end of the 23S rRNA. It is important during the early stages of 50S assembly. It makes multiple contacts with different domains of the 23S rRNA in the assembled 50S subunit and ribosome. Its function is as follows. Forms part of the polypeptide exit tunnel. The polypeptide is Large ribosomal subunit protein uL4 (Sulfolobus acidocaldarius (strain ATCC 33909 / DSM 639 / JCM 8929 / NBRC 15157 / NCIMB 11770)).